Here is a 501-residue protein sequence, read N- to C-terminus: Lysine--tRNA ligase (501 aa).

Mg(2+) contacts are provided by glutamate 411 and glutamate 418.

Belongs to the class-II aminoacyl-tRNA synthetase family. Homodimer. Mg(2+) is required as a cofactor.

It is found in the cytoplasm. It carries out the reaction tRNA(Lys) + L-lysine + ATP = L-lysyl-tRNA(Lys) + AMP + diphosphate. The sequence is that of Lysine--tRNA ligase from Clostridium perfringens (strain 13 / Type A).